The sequence spans 132 residues: Fatty acid-binding protein 12 (132 aa).

Residues Arg-107 and 127–129 (RTY) contribute to the a fatty acid site.

The protein belongs to the calycin superfamily. Fatty-acid binding protein (FABP) family. In terms of tissue distribution, highly expressed in adult retina and testis.

Functionally, may play a role in lipid transport. The chain is Fatty acid-binding protein 12 (Fabp12) from Mus musculus (Mouse).